Here is a 482-residue protein sequence, read N- to C-terminus: MVESQKAMPQPKMGRIRRIHFVGIGGVGMCGIAEVLLNLGYEVSGSDLKASPVTERLESFGAEIFVGHRAENAATADVLVVSSAINPANPEVATALERRIPVVPRAEMLAELMRYRHGVAVAGTHGKTTTTSLLASVFAAGGLDPTFVIGGRLTAAGTNAQLGTSRYLIAEADESDASFLHLQPMVAVVTNIDADHMATYEGDFNKLKKTFVEFLHNLPFYGLAVMCLDDPVVREILPQVKRPTVTYGFSEEADIRAINVRQQGMQTHFTVLRRDCEPLEVSVNMPGNHNVLNALATIAIATDEGITDEAIIQGLSGFQGVGRRFQVYGELPVEGGSVMLVDDYGHHPTEVAAVIKAVRGGWPSRRLVIVYQPHRYSRTRDLYDDFVQVLGDANVLLLMEVYPAGEEPIPGADSRQLCHSIRQRGKLDPIYIERGAELAPLVKPLLRAGDILICQGAGDVGGLAPQLMKSPLFAGAKQEKSK.

123–129 (GTHGKTT) is an ATP binding site.

This sequence belongs to the MurCDEF family.

Its subcellular location is the cytoplasm. It catalyses the reaction UDP-N-acetyl-alpha-D-muramate + L-alanine + ATP = UDP-N-acetyl-alpha-D-muramoyl-L-alanine + ADP + phosphate + H(+). Its pathway is cell wall biogenesis; peptidoglycan biosynthesis. Functionally, cell wall formation. The chain is UDP-N-acetylmuramate--L-alanine ligase from Pseudomonas putida (strain GB-1).